A 377-amino-acid polypeptide reads, in one-letter code: Homoserine O-succinyltransferase (377 aa).

Residues 45 to 356 (NAVLVCHALN…PHGHDAFLLD (312 aa)) enclose the AB hydrolase-1 domain. Residue Ser151 is the Nucleophile of the active site. Substrate is bound at residue Arg221. Residues Asp317 and His350 contribute to the active site. Position 351 (Asp351) interacts with substrate.

The protein belongs to the AB hydrolase superfamily. MetX family. In terms of assembly, homodimer.

Its subcellular location is the cytoplasm. The catalysed reaction is L-homoserine + succinyl-CoA = O-succinyl-L-homoserine + CoA. Its pathway is amino-acid biosynthesis; L-methionine biosynthesis via de novo pathway; O-succinyl-L-homoserine from L-homoserine: step 1/1. In terms of biological role, transfers a succinyl group from succinyl-CoA to L-homoserine, forming succinyl-L-homoserine. The polypeptide is Homoserine O-succinyltransferase (Leptothrix cholodnii (strain ATCC 51168 / LMG 8142 / SP-6) (Leptothrix discophora (strain SP-6))).